The chain runs to 62 residues: DNA-directed RNA polymerase subunit Rpo10 (62 aa).

Zn(2+) is bound by residues cysteine 6, cysteine 9, cysteine 43, and cysteine 44.

This sequence belongs to the archaeal Rpo10/eukaryotic RPB10 RNA polymerase subunit family. As to quaternary structure, part of the RNA polymerase complex. Zn(2+) serves as cofactor.

The protein localises to the cytoplasm. It carries out the reaction RNA(n) + a ribonucleoside 5'-triphosphate = RNA(n+1) + diphosphate. Functionally, DNA-dependent RNA polymerase (RNAP) catalyzes the transcription of DNA into RNA using the four ribonucleoside triphosphates as substrates. The chain is DNA-directed RNA polymerase subunit Rpo10 from Methanococcoides burtonii (strain DSM 6242 / NBRC 107633 / OCM 468 / ACE-M).